We begin with the raw amino-acid sequence, 232 residues long: Octanoyltransferase (232 aa).

The BPL/LPL catalytic domain occupies 44–219; the sequence is EHTGDELWVV…QLARQFGLVL (176 aa). Substrate contacts are provided by residues 83-90, 150-152, and 163-165; these read RGGQVTYH, ALG, and GLS. The active-site Acyl-thioester intermediate is C181.

It belongs to the LipB family.

Its subcellular location is the cytoplasm. It catalyses the reaction octanoyl-[ACP] + L-lysyl-[protein] = N(6)-octanoyl-L-lysyl-[protein] + holo-[ACP] + H(+). Its pathway is protein modification; protein lipoylation via endogenous pathway; protein N(6)-(lipoyl)lysine from octanoyl-[acyl-carrier-protein]: step 1/2. Catalyzes the transfer of endogenously produced octanoic acid from octanoyl-acyl-carrier-protein onto the lipoyl domains of lipoate-dependent enzymes. Lipoyl-ACP can also act as a substrate although octanoyl-ACP is likely to be the physiological substrate. The polypeptide is Octanoyltransferase (Xanthomonas campestris pv. campestris (strain B100)).